A 300-amino-acid polypeptide reads, in one-letter code: Iron-dependent extradiol dioxygenase (300 aa).

2 VOC domains span residues 5-120 and 142-270; these read SLGY…VFHG and GMGH…FGCE. Fe cation is bound at residue H145. The substrate site is built by H200, H215, D250, and Y256. Position 215 (H215) interacts with Fe cation. E266 is a binding site for Fe cation.

Belongs to the extradiol ring-cleavage dioxygenase family. As to quaternary structure, homodimer, but may form a homooctamer. Fe(2+) serves as cofactor.

It carries out the reaction 3,4-dihydroxy-9,10-secoandrosta-1,3,5(10)-triene-9,17-dione + O2 = (1E,2Z)-3-hydroxy-5,9,17-trioxo-4,5:9,10-disecoandrosta-1(10),2-dien-4-oate + H(+). Its pathway is steroid metabolism; cholesterol metabolism. Functionally, catalyzes the meta-cleavage of 3,4-dihydroxy-9,10-seconandrost-1,3,5(10)-triene-9,17-dione (3,4-DHSA) to produce 4,5-9,10-diseco-3-hydroxy-5,9,17-trioxoandrosta-1(10),2-diene-4-oic acid (4,9-DSHA). The protein is Iron-dependent extradiol dioxygenase (hsaC) of Mycobacterium tuberculosis (strain CDC 1551 / Oshkosh).